The primary structure comprises 116 residues: Large ribosomal subunit protein bL20 (116 aa).

The protein belongs to the bacterial ribosomal protein bL20 family.

Its function is as follows. Binds directly to 23S ribosomal RNA and is necessary for the in vitro assembly process of the 50S ribosomal subunit. It is not involved in the protein synthesizing functions of that subunit. This is Large ribosomal subunit protein bL20 (rplT) from Mycoplasmopsis fermentans (Mycoplasma fermentans).